The primary structure comprises 425 residues: Putative E3 ubiquitin-protein ligase UBR7 (425 aa).

The segment at 44-116 (EKCSYSQGSV…KNLECKLLPD (73 aa)) adopts a UBR-type zinc-finger fold. Residues 132–188 (GLYCICKRPYPDPEDEIPDEMIQCVVCEDWFHGRHLGAIPPESGDFQEMVCQACMKR) form a PHD-type; atypical zinc finger. Glycyl lysine isopeptide (Lys-Gly) (interchain with G-Cter in SUMO2) cross-links involve residues Lys-225 and Lys-252. The disordered stretch occupies residues 225-246 (KPENGEHQDSTLKEDVPEQGKD). Ser-264 is modified (phosphoserine). A Glycyl lysine isopeptide (Lys-Gly) (interchain with G-Cter in SUMO2) cross-link involves residue Lys-274. The residue at position 354 (Ser-354) is a Phosphoserine. Lys-398 participates in a covalent cross-link: Glycyl lysine isopeptide (Lys-Gly) (interchain with G-Cter in SUMO2).

In terms of tissue distribution, expressed in sperm (at protein level).

The catalysed reaction is S-ubiquitinyl-[E2 ubiquitin-conjugating enzyme]-L-cysteine + [acceptor protein]-L-lysine = [E2 ubiquitin-conjugating enzyme]-L-cysteine + N(6)-ubiquitinyl-[acceptor protein]-L-lysine.. It functions in the pathway protein modification; protein ubiquitination. Its function is as follows. E3 ubiquitin-protein ligase which is a component of the N-end rule pathway. Recognizes and binds to proteins bearing specific N-terminal residues that are destabilizing according to the N-end rule, leading to their ubiquitination and subsequent degradation. The sequence is that of Putative E3 ubiquitin-protein ligase UBR7 (UBR7) from Homo sapiens (Human).